Here is a 76-residue protein sequence, read N- to C-terminus: Putative defensin-like protein 62 (76 aa).

The signal sequence occupies residues 1–26 (MDVTKTYVTIFVVAILTISVLIQIQQ). Intrachain disulfides connect Cys-30-Cys-71, Cys-34-Cys-57, Cys-43-Cys-69, and Cys-47-Cys-70.

The protein belongs to the DEFL family.

The protein resides in the secreted. This is Putative defensin-like protein 62 from Arabidopsis thaliana (Mouse-ear cress).